A 371-amino-acid polypeptide reads, in one-letter code: Neuropeptide S receptor (371 aa).

Residues 1–52 are Extracellular-facing; it reads MPANFTEGSFDSNGTGQMLDSSPVACTETVTFTEVVEGKEWGSFYYSFKTEQ. N4 and N13 each carry an N-linked (GlcNAc...) asparagine glycan. A helical transmembrane segment spans residues 53–73; sequence LITLWVLFVFTIVGNSVVLFS. At 74-82 the chain is on the cytoplasmic side; sequence TWRRKRKSR. The helical transmembrane segment at 83–103 threads the bilayer; sequence MTFFVTQLAITDSFTGLVNIL. Topologically, residues 104–123 are extracellular; that stretch reads TDIIWRFTGDFMAPDLVCRV. C121 and C197 are oxidised to a cystine. The chain crosses the membrane as a helical span at residues 124–144; sequence VRYLQVVLLYASTYVLVSLSI. The Cytoplasmic portion of the chain corresponds to 145 to 164; it reads DRYHAIVYPMKFLQGEKQAK. A helical transmembrane segment spans residues 165–185; it reads VLIVIAWSLSFLFSIPTLIIF. Topologically, residues 186–212 are extracellular; it reads GKRTLSNGEVQCWALWPDDSYWTPYMT. A helical transmembrane segment spans residues 213–233; sequence IVAFLVYFIPLTIISVMYGIV. Residues 234–275 lie on the Cytoplasmic side of the membrane; the sequence is IRTIWIKSKTYETVISNCSDGKLCSSYNRGLISKAKIKAIKY. A helical transmembrane segment spans residues 276–296; sequence SIVIILAFICCWSPYFLFDIL. Over 297 to 312 the chain is Extracellular; that stretch reads DNFNLLPDTQERFYAS. The helical transmembrane segment at 313–333 threads the bilayer; it reads VIIQNLPALNSAINPLIYCVF. Residues 334–371 are Cytoplasmic-facing; sequence SSSISFPCGERRSQDSIMTFRERTERHEMQILSKPEFI.

The protein belongs to the G-protein coupled receptor 1 family. Vasopressin/oxytocin receptor subfamily.

It localises to the cell membrane. G-protein coupled receptor for neuropeptide S (NPS). Promotes mobilization of intracellular Ca(2+) stores. Inhibits cell growth in response to NPS binding. Involved in pathogenesis of asthma and other IgE-mediated diseases. The sequence is that of Neuropeptide S receptor (NPSR1) from Macaca mulatta (Rhesus macaque).